The following is a 473-amino-acid chain: H(+)/Cl(-) exchange transporter ClcA (473 aa).

Residues 1–32 (MKTDTPSLETPQAARLRRRQLIRQLLERDKTP) are Cytoplasmic-facing. A helical membrane pass occupies residues 33–69 (LAILFMAAVVGTLVGLAAVAFDKGVAWLQNQRMGALV). Residues 70-76 (HTADNYP) lie on the Periplasmic side of the membrane. Residues 77–100 (LLLTVAFLCSAVLAMFGYFLVRKY) traverse the membrane as a helical segment. The Selectivity filter part_1 motif lies at 106-110 (GSGIP). Residue serine 107 participates in chloride binding. The segment at residues 109 to 116 (IPEIEGAL) is an intramembrane region (helical). At 117 to 123 (EDQRPVR) the chain is on the cytoplasmic side. 2 consecutive transmembrane segments (helical) span residues 124–141 (WWRV…TLGG) and 148–166 (EGPT…LDVF). Positions 146-150 (GREGP) match the Selectivity filter part_2 motif. Residues 167–176 (RLKGDEARHT) are Cytoplasmic-facing. 2 consecutive intramembrane regions (helical) follow at residues 177 to 189 (LLAT…LAAA) and 193 to 201 (PLAGILFII). Over 202–214 (EEMRPQFRYTLIS) the chain is Cytoplasmic. The chain crosses the membrane as a helical span at residues 215-232 (IKAVFIGVIMSTIMYRIF). Over 233–252 (NHEVALIDVGKLSDAPLNTL) the chain is Periplasmic. A helical transmembrane segment spans residues 253-281 (WLYLILGIIFGIFGPIFNKWVLGMQDLLH). The Cytoplasmic portion of the chain corresponds to 282–287 (RVHGGN). A helical membrane pass occupies residues 288 to 309 (ITKWVLMGGAIGGLCGLLGFVA). Residues 310–329 (PATSGGGFNLIPIATAGNFS) are Periplasmic-facing. Helical transmembrane passes span 330–349 (MGML…LCFS) and 355–376 (GIFA…MVAV). Positions 355–359 (GIFAP) match the Selectivity filter part_3 motif. Chloride contacts are provided by isoleucine 356 and phenylalanine 357. At 377–386 (ELFPQYHLEA) the chain is on the periplasmic side. The helical intramembrane region spans 387 to 401 (GTFAIAGMGALLAAS). Residues 402 to 404 (IRA) constitute an intramembrane region (note=Loop between two helices). The segment at residues 405 to 416 (PLTGIILVLEMT) is an intramembrane region (helical). The segment at residues 417–421 (DNYQL) is an intramembrane region (note=Loop between two helices). The helical transmembrane segment at 422-438 (ILPMIITGLGATLLAQF) threads the bilayer. The Cytoplasmic portion of the chain corresponds to 439-473 (TGGKPLYSAILARTLAKQEAEQLARSKAASARENT). Tyrosine 445 contacts chloride.

The protein belongs to the chloride channel (TC 2.A.49) family. ClcA subfamily. As to quaternary structure, homodimer.

It localises to the cell inner membrane. The enzyme catalyses 2 chloride(in) + H(+)(out) = 2 chloride(out) + H(+)(in). Its function is as follows. Proton-coupled chloride transporter. Functions as antiport system and exchanges two chloride ions for 1 proton. Probably acts as an electrical shunt for an outwardly-directed proton pump that is linked to amino acid decarboxylation, as part of the extreme acid resistance (XAR) response. In Escherichia coli O45:K1 (strain S88 / ExPEC), this protein is H(+)/Cl(-) exchange transporter ClcA.